A 151-amino-acid polypeptide reads, in one-letter code: Small ribosomal subunit protein uS11 (151 aa).

Positions 131–151 (DVTPVPSDSTRRKGGRRGRRL) are disordered. The segment covering 142-151 (RKGGRRGRRL) has biased composition (basic residues).

This sequence belongs to the universal ribosomal protein uS11 family.

The polypeptide is Small ribosomal subunit protein uS11 (Bombyx mori (Silk moth)).